We begin with the raw amino-acid sequence, 174 residues long: Peptide deformylase (174 aa).

Cys-91 and His-133 together coordinate Fe cation. The active site involves Glu-134. His-137 is a binding site for Fe cation.

It belongs to the polypeptide deformylase family. The cofactor is Fe(2+).

It carries out the reaction N-terminal N-formyl-L-methionyl-[peptide] + H2O = N-terminal L-methionyl-[peptide] + formate. Functionally, removes the formyl group from the N-terminal Met of newly synthesized proteins. Requires at least a dipeptide for an efficient rate of reaction. N-terminal L-methionine is a prerequisite for activity but the enzyme has broad specificity at other positions. The protein is Peptide deformylase of Fusobacterium nucleatum subsp. nucleatum (strain ATCC 25586 / DSM 15643 / BCRC 10681 / CIP 101130 / JCM 8532 / KCTC 2640 / LMG 13131 / VPI 4355).